A 389-amino-acid chain; its full sequence is Dual-specificity RNA methyltransferase RlmN (389 aa).

Glu110 serves as the catalytic Proton acceptor. Residues 116 to 355 form the Radical SAM core domain; that stretch reads EKDRATLCVS…TIVRKTRGDD (240 aa). Cys123 and Cys360 form a disulfide bridge. Residues Cys130, Cys134, and Cys137 each contribute to the [4Fe-4S] cluster site. Residues 184–185, Ser216, 238–240, and Asn317 contribute to the S-adenosyl-L-methionine site; these read GE and SLH. Cys360 acts as the S-methylcysteine intermediate in catalysis.

This sequence belongs to the radical SAM superfamily. RlmN family. It depends on [4Fe-4S] cluster as a cofactor.

The protein localises to the cytoplasm. The catalysed reaction is adenosine(2503) in 23S rRNA + 2 reduced [2Fe-2S]-[ferredoxin] + 2 S-adenosyl-L-methionine = 2-methyladenosine(2503) in 23S rRNA + 5'-deoxyadenosine + L-methionine + 2 oxidized [2Fe-2S]-[ferredoxin] + S-adenosyl-L-homocysteine. It carries out the reaction adenosine(37) in tRNA + 2 reduced [2Fe-2S]-[ferredoxin] + 2 S-adenosyl-L-methionine = 2-methyladenosine(37) in tRNA + 5'-deoxyadenosine + L-methionine + 2 oxidized [2Fe-2S]-[ferredoxin] + S-adenosyl-L-homocysteine. Specifically methylates position 2 of adenine 2503 in 23S rRNA and position 2 of adenine 37 in tRNAs. m2A2503 modification seems to play a crucial role in the proofreading step occurring at the peptidyl transferase center and thus would serve to optimize ribosomal fidelity. In Erwinia tasmaniensis (strain DSM 17950 / CFBP 7177 / CIP 109463 / NCPPB 4357 / Et1/99), this protein is Dual-specificity RNA methyltransferase RlmN.